Consider the following 184-residue polypeptide: Photosystem I assembly protein Ycf4 (184 aa).

Helical transmembrane passes span phenylalanine 22–serine 42 and isoleucine 57–serine 77.

The protein belongs to the Ycf4 family.

Its subcellular location is the plastid. The protein resides in the chloroplast thylakoid membrane. Functionally, seems to be required for the assembly of the photosystem I complex. This chain is Photosystem I assembly protein Ycf4, found in Lobularia maritima (Sweet alyssum).